The following is a 92-amino-acid chain: Small ribosomal subunit protein uS19c (92 aa).

The protein belongs to the universal ribosomal protein uS19 family.

The protein resides in the plastid. Its subcellular location is the chloroplast. Functionally, protein S19 forms a complex with S13 that binds strongly to the 16S ribosomal RNA. In Gossypium barbadense (Sea Island cotton), this protein is Small ribosomal subunit protein uS19c.